The primary structure comprises 273 residues: Dermonecrotic toxin LhSicTox-alphaIA2biii (273 aa).

Histidine 5 is a catalytic residue. Mg(2+)-binding residues include glutamate 25 and aspartate 27. Histidine 41 (nucleophile) is an active-site residue. Intrachain disulfides connect cysteine 45–cysteine 51 and cysteine 47–cysteine 190. A Mg(2+)-binding site is contributed by aspartate 85.

The protein belongs to the arthropod phospholipase D family. Class II subfamily. It depends on Mg(2+) as a cofactor. As to expression, expressed by the venom gland.

It localises to the secreted. It catalyses the reaction an N-(acyl)-sphingosylphosphocholine = an N-(acyl)-sphingosyl-1,3-cyclic phosphate + choline. It carries out the reaction an N-(acyl)-sphingosylphosphoethanolamine = an N-(acyl)-sphingosyl-1,3-cyclic phosphate + ethanolamine. The enzyme catalyses a 1-acyl-sn-glycero-3-phosphocholine = a 1-acyl-sn-glycero-2,3-cyclic phosphate + choline. The catalysed reaction is a 1-acyl-sn-glycero-3-phosphoethanolamine = a 1-acyl-sn-glycero-2,3-cyclic phosphate + ethanolamine. Dermonecrotic toxins cleave the phosphodiester linkage between the phosphate and headgroup of certain phospholipids (sphingolipid and lysolipid substrates), forming an alcohol (often choline) and a cyclic phosphate. This toxin acts on sphingomyelin (SM). It may also act on ceramide phosphoethanolamine (CPE), lysophosphatidylcholine (LPC) and lysophosphatidylethanolamine (LPE), but not on lysophosphatidylserine (LPS), and lysophosphatidylglycerol (LPG). It acts by transphosphatidylation, releasing exclusively cyclic phosphate products as second products. Induces dermonecrosis, hemolysis, increased vascular permeability, edema, inflammatory response, and platelet aggregation. In Loxosceles hirsuta (Recluse spider), this protein is Dermonecrotic toxin LhSicTox-alphaIA2biii.